The chain runs to 38 residues: Phospholipase A2 1 (38 aa).

Residues tyrosine 28, glycine 30, and glycine 32 each coordinate Ca(2+).

It belongs to the phospholipase A2 family. Group I subfamily. It depends on Ca(2+) as a cofactor. As to expression, expressed by the venom gland.

It localises to the secreted. It carries out the reaction a 1,2-diacyl-sn-glycero-3-phosphocholine + H2O = a 1-acyl-sn-glycero-3-phosphocholine + a fatty acid + H(+). Functionally, snake venom phospholipase A2 (PLA2) that inhibits neuromuscular transmission by blocking acetylcholine release from the nerve termini. PLA2 catalyzes the calcium-dependent hydrolysis of the 2-acyl groups in 3-sn-phosphoglycerides. The chain is Phospholipase A2 1 from Calliophis bivirgatus (Blue Malaysian coral snake).